A 114-amino-acid chain; its full sequence is Hemerythrin subunit 1 (114 aa).

Fe cation is bound by residues His26, His55, Glu59, His74, His78, His102, and Asp107.

This sequence belongs to the hemerythrin family.

Its function is as follows. Hemerythrin is a respiratory protein in blood cells of certain marine worms. The oxygen-binding site in each chain contains two iron atoms. The polypeptide is Hemerythrin subunit 1 (Golfingia vulgaris (Marine worm)).